The chain runs to 220 residues: UPF0441 protein Spro_4274 (220 aa).

Positions M181–G220 are disordered. Residues Q203 to G220 are compositionally biased toward low complexity.

The protein belongs to the UPF0441 family.

The protein is UPF0441 protein Spro_4274 of Serratia proteamaculans (strain 568).